The primary structure comprises 124 residues: AESSAMKFQRQHMDSDGHPDTNTNYCNEMMVRRSMTQGRCKPVNTFVHEPLEAVQAVCSQKNVPCKNGQTNCYQSHSSMRITDCRVTSSSKYPNCSYRMTQAQKSIIVACEGTPSVPVHFDATV.

Residues 1-21 are disordered; sequence AESSAMKFQRQHMDSDGHPDT. K7 and R10 together coordinate substrate. H12 serves as the catalytic Proton acceptor. 4 disulfides stabilise this stretch: C26-C84, C40-C95, C58-C110, and C65-C72. Substrate-binding positions include 41 to 45, K66, and R85; that span reads KPVNT. Residue H119 is the Proton donor of the active site.

The protein belongs to the pancreatic ribonuclease family. In terms of assembly, monomer. Interacts with and forms tight 1:1 complexes with RNH1. Dimerization of two such complexes may occur. Interaction with RNH1 inhibits this protein. In terms of tissue distribution, pancreas.

It localises to the secreted. It catalyses the reaction an [RNA] containing cytidine + H2O = an [RNA]-3'-cytidine-3'-phosphate + a 5'-hydroxy-ribonucleotide-3'-[RNA].. The enzyme catalyses an [RNA] containing uridine + H2O = an [RNA]-3'-uridine-3'-phosphate + a 5'-hydroxy-ribonucleotide-3'-[RNA].. Functionally, endonuclease that catalyzes the cleavage of RNA on the 3' side of pyrimidine nucleotides. Acts on single-stranded and double-stranded RNA. The sequence is that of Ribonuclease pancreatic (RNASE1) from Galea musteloides (Common yellow-toothed cavy).